The primary structure comprises 276 residues: Large ribosomal subunit protein uL2 (276 aa).

Residues 219 to 268 form a disordered region; it reads TVRGSVMNPNDHPHGGGEGRQPVGRKSPMTPWGKPALGLKTRNKKAKSSK.

This sequence belongs to the universal ribosomal protein uL2 family. As to quaternary structure, part of the 50S ribosomal subunit. Forms a bridge to the 30S subunit in the 70S ribosome.

One of the primary rRNA binding proteins. Required for association of the 30S and 50S subunits to form the 70S ribosome, for tRNA binding and peptide bond formation. It has been suggested to have peptidyltransferase activity; this is somewhat controversial. Makes several contacts with the 16S rRNA in the 70S ribosome. The chain is Large ribosomal subunit protein uL2 from Lactococcus lactis subsp. lactis (strain IL1403) (Streptococcus lactis).